An 88-amino-acid polypeptide reads, in one-letter code: Putative defensin-like protein 256 (88 aa).

A signal peptide spans 1–25; the sequence is MKSSIFFKLLLLVSLLVVIFRQSYA. 3 disulfides stabilise this stretch: Cys30/Cys46, Cys36/Cys53, and Cys40/Cys55.

Belongs to the DEFL family.

It localises to the secreted. The sequence is that of Putative defensin-like protein 256 from Arabidopsis thaliana (Mouse-ear cress).